We begin with the raw amino-acid sequence, 507 residues long: Pyruvate kinase (507 aa).

Arginine 50 contacts substrate. K(+) contacts are provided by asparagine 52, serine 54, aspartate 84, and threonine 85. 52–55 (NFSH) contacts ATP. 2 residues coordinate ATP: arginine 91 and lysine 177. Position 242 (glutamate 242) interacts with Mg(2+). Substrate-binding residues include glycine 265, aspartate 266, and threonine 298. Aspartate 266 contributes to the Mg(2+) binding site.

It belongs to the pyruvate kinase family. In terms of assembly, homotetramer. Mg(2+) is required as a cofactor. K(+) serves as cofactor.

It catalyses the reaction pyruvate + ATP = phosphoenolpyruvate + ADP + H(+). It participates in carbohydrate degradation; glycolysis; pyruvate from D-glyceraldehyde 3-phosphate: step 5/5. This chain is Pyruvate kinase (pyk), found in Dictyostelium discoideum (Social amoeba).